Here is a 374-residue protein sequence, read N- to C-terminus: Chaperone protein DnaJ (374 aa).

The region spanning 5–70 (CYYEILNVSK…GKRSRYDQFG (66 aa)) is the J domain. The CR-type zinc finger occupies 130–207 (GVEKEINIPR…CYGSGKIKKQ (78 aa)). 8 residues coordinate Zn(2+): Cys-143, Cys-146, Cys-159, Cys-162, Cys-181, Cys-184, Cys-195, and Cys-198. CXXCXGXG motif repeat units lie at residues 143-150 (CDSCDGTG), 159-166 (CHACHGQG), 181-188 (CPVCNGTG), and 195-202 (CDDCYGSG).

Belongs to the DnaJ family. Homodimer. It depends on Zn(2+) as a cofactor.

It is found in the cytoplasm. Its function is as follows. Participates actively in the response to hyperosmotic and heat shock by preventing the aggregation of stress-denatured proteins and by disaggregating proteins, also in an autonomous, DnaK-independent fashion. Unfolded proteins bind initially to DnaJ; upon interaction with the DnaJ-bound protein, DnaK hydrolyzes its bound ATP, resulting in the formation of a stable complex. GrpE releases ADP from DnaK; ATP binding to DnaK triggers the release of the substrate protein, thus completing the reaction cycle. Several rounds of ATP-dependent interactions between DnaJ, DnaK and GrpE are required for fully efficient folding. Also involved, together with DnaK and GrpE, in the DNA replication of plasmids through activation of initiation proteins. The chain is Chaperone protein DnaJ from Francisella philomiragia subsp. philomiragia (strain ATCC 25017 / CCUG 19701 / FSC 153 / O#319-036).